Here is a 348-residue protein sequence, read N- to C-terminus: Ubiquitin thioesterase OTU1 (348 aa).

Over residues 1–11 (MFGPAKGRHFG) the composition is skewed to basic residues. Residues 1–39 (MFGPAKGRHFGVHPAPGFPGGVSQQAAGTKAGPAGAWPV) form a disordered region. Residues 50–128 (RCKAKDGTHV…IIEEDQTRPR (79 aa)) are UBX-like. The OTU domain maps to 149–274 (LTRTVVPADN…GIHYDPLQRN (126 aa)). Residues 154 to 160 (VPADNSC) are cys-loop. Residue Asp-157 is part of the active site. Cys-160 functions as the Nucleophile in the catalytic mechanism. The interval 213-223 (IKRDDTWGGAI) is variable-loop. A his-loop region spans residues 263–267 (YDGIH). Ile-266 contacts substrate. His-267 is an active-site residue. The segment at 291-296 (DIVLVQ) is S2 site. The segment at 318-342 (LRCMVCQKGLTGQAEAREHAKETGH) adopts a C2H2-type zinc-finger fold. His-342 is an active-site residue.

As to quaternary structure, interacts with VCP; the interaction is direct. Interacts with FAF2/UBXD8. Interacts with DERL1; however interaction is dependent on the UBAX-like region, suggesting that it may be indirect. Interacts with PLAA, UBXN6 and VCP; may form a complex involved in macroautophagy.

It is found in the cytoplasm. The catalysed reaction is Thiol-dependent hydrolysis of ester, thioester, amide, peptide and isopeptide bonds formed by the C-terminal Gly of ubiquitin (a 76-residue protein attached to proteins as an intracellular targeting signal).. Its function is as follows. Hydrolase that can remove conjugated ubiquitin from proteins and participates in endoplasmic reticulum-associated degradation (ERAD) for misfolded lumenal proteins. May act by triming the ubiquitin chain on the associated substrate to facilitate their threading through the VCP/p97 pore. Ubiquitin moieties on substrates may present a steric impediment to the threading process when the substrate is transferred to the VCP pore and threaded through VCP's axial channel. Mediates deubiquitination of 'Lys-27'-, 'Lys-29'- and 'Lys-33'-linked polyubiquitin chains. Also able to hydrolyze 'Lys-11'-linked ubiquitin chains. Cleaves both polyubiquitin and di-ubiquitin. May play a role in macroautophagy, regulating for instance the clearance of damaged lysosomes. May recruit PLAA, UBXN6 and VCP to damaged lysosome membranes decorated with K48-linked ubiquitin chains and remove these chains allowing autophagosome formation. In Homo sapiens (Human), this protein is Ubiquitin thioesterase OTU1 (YOD1).